The chain runs to 347 residues: Quinolinate synthase (347 aa).

2 residues coordinate iminosuccinate: H47 and S68. Residue C113 coordinates [4Fe-4S] cluster. Residues 139–141 (YAN) and S156 contribute to the iminosuccinate site. [4Fe-4S] cluster is bound at residue C200. Iminosuccinate is bound by residues 226 to 228 (HPE) and T243. A [4Fe-4S] cluster-binding site is contributed by C297.

Belongs to the quinolinate synthase family. Type 1 subfamily. [4Fe-4S] cluster serves as cofactor.

It is found in the cytoplasm. The catalysed reaction is iminosuccinate + dihydroxyacetone phosphate = quinolinate + phosphate + 2 H2O + H(+). Its pathway is cofactor biosynthesis; NAD(+) biosynthesis; quinolinate from iminoaspartate: step 1/1. Its function is as follows. Catalyzes the condensation of iminoaspartate with dihydroxyacetone phosphate to form quinolinate. The protein is Quinolinate synthase of Enterobacter sp. (strain 638).